A 411-amino-acid polypeptide reads, in one-letter code: Na(+)-translocating NADH-quinone reductase subunit F (411 aa).

Residues 5-25 (VILALGIAAFTVIVLVLVAII) traverse the membrane as a helical segment. A 2Fe-2S ferredoxin-type domain is found at 36–130 (GDITIGINDD…NMEVELPEEI (95 aa)). Positions 73, 79, 82, and 114 each coordinate [2Fe-2S] cluster. The FAD-binding FR-type domain maps to 133–273 (VKKWECTVIS…SGPFGEFFAK (141 aa)).

It belongs to the NqrF family. As to quaternary structure, composed of six subunits; NqrA, NqrB, NqrC, NqrD, NqrE and NqrF. [2Fe-2S] cluster is required as a cofactor. Requires FAD as cofactor.

The protein localises to the cell inner membrane. It carries out the reaction a ubiquinone + n Na(+)(in) + NADH + H(+) = a ubiquinol + n Na(+)(out) + NAD(+). Its function is as follows. NQR complex catalyzes the reduction of ubiquinone-1 to ubiquinol by two successive reactions, coupled with the transport of Na(+) ions from the cytoplasm to the periplasm. The first step is catalyzed by NqrF, which accepts electrons from NADH and reduces ubiquinone-1 to ubisemiquinone by a one-electron transfer pathway. The polypeptide is Na(+)-translocating NADH-quinone reductase subunit F (Haemophilus influenzae (strain PittEE)).